Consider the following 824-residue polypeptide: Kinesin-like protein KIFC3 (824 aa).

Residues 27–79 (EPKPGMARPAPASPAARPFPHTGQGRLRTGRGKDILPSGEEDSTSRTAARPSL) are disordered. Low complexity predominate over residues 33–46 (ARPAPASPAARPFP). 2 coiled-coil regions span residues 100–360 (LTVQ…ENLA) and 393–430 (LLQE…LQLR). Residues 443–766 (NIRVIARVRP…LRFAERVRSV (324 aa)) form the Kinesin motor domain. Residue 526-533 (GQTGAGKT) coordinates ATP. The tract at residues 771-824 (GSRRTELGSWSSQEHLEWEPACQTPQPTARAHSAPGSGTSSRPGSIRRKLQPSA) is disordered. A phosphoserine mark is found at S811 and S815. The span at 815 to 824 (SIRRKLQPSA) shows a compositional bias: basic residues.

This sequence belongs to the TRAFAC class myosin-kinesin ATPase superfamily. Kinesin family. In terms of assembly, interacts with annexin XIIIB. Predominant expression in the kidney, testis and ovary. Also expressed in brain, heart, liver, lung and uterus.

It is found in the cytoplasm. The protein resides in the cytoskeleton. Its subcellular location is the cytoplasmic vesicle membrane. The protein localises to the cell junction. It localises to the adherens junction. It is found in the microtubule organizing center. The protein resides in the centrosome. Minus-end microtubule-dependent motor protein. Involved in apically targeted transport. Required for zonula adherens maintenance. This chain is Kinesin-like protein KIFC3 (Kifc3), found in Mus musculus (Mouse).